An 842-amino-acid polypeptide reads, in one-letter code: Elongation factor 2 (842 aa).

The region spanning 17 to 346 (TNVRNMSVIA…MIVLHLPSPV (330 aa)) is the tr-type G domain. GTP-binding positions include 26–33 (AHVDHGKS), 158–161 (NKVD), and 213–215 (SGL). Lysine 509 is modified (N6,N6,N6-trimethyllysine; by EFM3; alternate). Position 509 is an N6,N6-dimethyllysine; by EFM3; alternate (lysine 509). Lysine 509 bears the N6-methyllysine; by EFM3; alternate mark. The residue at position 579 (serine 579) is a Phosphoserine. At lysine 613 the chain carries N6,N6-dimethyllysine; by EFM2; alternate. Lysine 613 is subject to N6-methyllysine; by EFM2; alternate. The residue at position 699 (histidine 699) is a Diphthamide. Phosphothreonine is present on residues threonine 713 and threonine 763. Lysine 841 is covalently cross-linked (Glycyl lysine isopeptide (Lys-Gly) (interchain with G-Cter in ubiquitin)).

Belongs to the TRAFAC class translation factor GTPase superfamily. Classic translation factor GTPase family. EF-G/EF-2 subfamily. As to quaternary structure, binds to 80S ribosomes. Actively translating ribosomes show mutually exclusive binding of eIF5a (HYP2 or ANB1) and EFT1/eEF2. Interacts with the 40S ribosomal subunit protein RPL9A; the interaction is direct. Interacts with the 60S ribosomal subunit proteins RPL12A; the interaction is direct. Interacts with RPS23A; the interaction is direct. Interacts with 18S rRNA; the interaction is direct. Interacts with 25S rRNA; the interaction is direct. Interacts with RPL0. Interacts with STM1; promoting ribosome inactivation. (Microbial infection) Diphthamide can be ADP-ribosylated by diphtheria toxin and by Pseudomonas exotoxin A, thus abolishing its function.

Its subcellular location is the cytoplasm. The enzyme catalyses GTP + H2O = GDP + phosphate + H(+). Its pathway is protein biosynthesis; polypeptide chain elongation. Inhibited by fusidic acid and sordarin, which prevent the release of eEF2 from the ribosome after the translocation step. While fusidic acid acts on all eukaryotic eEF2, sordarin specifically binds and inhibits only selected fungal eEF2. Its function is as follows. Catalyzes the GTP-dependent ribosomal translocation step during translation elongation. During this step, the ribosome changes from the pre-translocational (PRE) to the post-translocational (POST) state as the newly formed A-site-bound peptidyl-tRNA and P-site-bound deacylated tRNA move to the P and E sites, respectively. Catalyzes the coordinated movement of the two tRNA molecules, the mRNA and conformational changes in the ribosome. The chain is Elongation factor 2 (EFT1) from Saccharomyces cerevisiae (strain ATCC 204508 / S288c) (Baker's yeast).